The chain runs to 540 residues: Chaperonin GroEL (540 aa).

ATP is bound by residues 29–32 (TLGP), 86–90 (DGTTT), glycine 413, 476–478 (NAA), and aspartate 492.

The protein belongs to the chaperonin (HSP60) family. In terms of assembly, forms a cylinder of 14 subunits composed of two heptameric rings stacked back-to-back. Interacts with the co-chaperonin GroES.

Its subcellular location is the cytoplasm. It carries out the reaction ATP + H2O + a folded polypeptide = ADP + phosphate + an unfolded polypeptide.. In terms of biological role, together with its co-chaperonin GroES, plays an essential role in assisting protein folding. The GroEL-GroES system forms a nano-cage that allows encapsulation of the non-native substrate proteins and provides a physical environment optimized to promote and accelerate protein folding. The polypeptide is Chaperonin GroEL (Streptococcus pneumoniae (strain P1031)).